A 469-amino-acid polypeptide reads, in one-letter code: Ubiquitin carboxyl-terminal hydrolase MINDY-1 (469 aa).

A disordered region spans residues 1–85 (MEHHQPEDPA…APPGPTLGTL (85 aa)). The span at 34–53 (HPQDTDARDADGEAGEREPA) shows a compositional bias: basic and acidic residues. Residue Ser-103 is modified to Phosphoserine. The active-site Nucleophile is Cys-137. Catalysis depends on His-319, which acts as the Proton acceptor. The segment at 388–426 (QVDQDYLIALSLQQQQPRGTLGLTDLELAQQLQQEEYQQ) is ubiquitin-binding domain (UBD). The segment at 428 to 469 (QAAQPVWMRTRALSPQGRGATSGRPAGERRQRPKHESDCILL) is disordered. Ser-441 bears the Phosphoserine mark. Over residues 453-469 (AGERRQRPKHESDCILL) the composition is skewed to basic and acidic residues.

Belongs to the MINDY deubiquitinase family. FAM63 subfamily.

The enzyme catalyses Thiol-dependent hydrolysis of ester, thioester, amide, peptide and isopeptide bonds formed by the C-terminal Gly of ubiquitin (a 76-residue protein attached to proteins as an intracellular targeting signal).. In terms of biological role, hydrolase that can specifically remove 'Lys-48'-linked conjugated ubiquitin from proteins. Has exodeubiquitinase activity and has a preference for long polyubiquitin chains. May play a regulatory role at the level of protein turnover. This chain is Ubiquitin carboxyl-terminal hydrolase MINDY-1 (MINDY1), found in Pongo abelii (Sumatran orangutan).